Here is a 398-residue protein sequence, read N- to C-terminus: Phosphoglycerate kinase (398 aa).

Residues 20 to 22, Arg35, 58 to 61, Arg118, and Arg155 each bind substrate; these read DFN and HLGK. ATP is bound by residues Lys208, Gly296, Glu327, and 354-357; that span reads GGDS.

This sequence belongs to the phosphoglycerate kinase family. In terms of assembly, monomer.

The protein localises to the cytoplasm. The enzyme catalyses (2R)-3-phosphoglycerate + ATP = (2R)-3-phospho-glyceroyl phosphate + ADP. Its pathway is carbohydrate degradation; glycolysis; pyruvate from D-glyceraldehyde 3-phosphate: step 2/5. This Fusobacterium nucleatum subsp. nucleatum (strain ATCC 25586 / DSM 15643 / BCRC 10681 / CIP 101130 / JCM 8532 / KCTC 2640 / LMG 13131 / VPI 4355) protein is Phosphoglycerate kinase.